A 375-amino-acid chain; its full sequence is Nucleosome assembly protein 1-like 4 (375 aa).

The disordered stretch occupies residues 1 to 28 (MAENSLSDGGPADSVEAAKNASNTEKLT). The residue at position 2 (Ala-2) is an N-acetylalanine. Residues Ser-5, Ser-7, and Ser-49 each carry the phosphoserine modification. The residue at position 51 (Thr-51) is a Phosphothreonine. Phosphoserine occurs at positions 53 and 54. Phosphothreonine is present on Thr-58. Lys-105 carries the post-translational modification N6-acetyllysine. Residue Ser-125 is modified to Phosphoserine. Lys-146 is modified (N6-acetyllysine). Residues 265–271 (IKKKQKH) carry the Nuclear localization signal motif. At Ser-304 the chain carries Phosphoserine. A disordered region spans residues 339–375 (AIEDDDNFEEGEEGEEEELEGDEEGEDEDDADVNPKV).

Belongs to the nucleosome assembly protein (NAP) family. In terms of assembly, interacts with core (H2A, H2B, H3, H4) and linker (H1) histones. In terms of processing, polyglutamylated and polyglycylated. These 2 modifications occur exclusively on glutamate residues and result in either polyglutamate or polyglycine chains on the gamma-carboxyl group. Both modifications can coexist on the same protein on adjacent residues, and lowering polyglycylation levels increases polyglutamylation, and reciprocally. Polyglutamylated by TTLL4. Post-translationally, phosphorylated at the G0/G1 boundary but it is not phosphorylated in S-phase. Phosphorylated protein remains in the cytoplasm in a complex with histones during the G0/G1 transition, whereas dephosphorylation triggers its transport into the nucleus at the G1/S-boundary.

It localises to the nucleus. It is found in the cytoplasm. Acts as a histone chaperone in nucleosome assembly. In condensing spermatids, mediates the loading of the heterodimer composed of histones H2AB1 and H2BC1/TH2B onto the nucleosomes, thereby promoting the replacement of histones to protamine in male germ cells. The sequence is that of Nucleosome assembly protein 1-like 4 (Nap1l4) from Mus musculus (Mouse).